Reading from the N-terminus, the 603-residue chain is NADH-ubiquinone oxidoreductase chain 5 (603 aa).

The next 16 membrane-spanning stretches (helical) occupy residues 4–24, 38–58, 89–109, 122–142, 171–191, 211–233, 241–261, 273–293, 301–320, 325–347, 366–386, 405–424, 457–477, 488–508, 524–544, and 582–602; these read FTTMTALTLTSLIPPITATLI, TAIASAFTISLIPTTMFICLG, FLPVALLITWSIMEFSLWYMA, LIFLITMIILVTANNLLQLFI, AILYNRIGDIGFILALAWFLL, LPLLGLLLAAAGKSAQLGLHPWL, TPVSALLHSSTMVVAGVFLLI, IQTLTLCLGAITTLFAAICAL, IVAFSTSSQLGLMMVTIGIN, ALLHICTHAFFKALLFMCSGSII, MPLTSTSLTISSLALAGMPFL, NTWALSITLIATSLTGAYST, LMLGSLFAGFLITNNIPPMSL, LAALAATLLGLLVALDLNYLA, IMLGFYPSIIHRMIPHLSLLM, and GLIKLYFLSFLIPLLLILLMI.

The protein belongs to the complex I subunit 5 family. Core subunit of respiratory chain NADH dehydrogenase (Complex I) which is composed of 45 different subunits.

It localises to the mitochondrion inner membrane. The enzyme catalyses a ubiquinone + NADH + 5 H(+)(in) = a ubiquinol + NAD(+) + 4 H(+)(out). Its function is as follows. Core subunit of the mitochondrial membrane respiratory chain NADH dehydrogenase (Complex I) which catalyzes electron transfer from NADH through the respiratory chain, using ubiquinone as an electron acceptor. Essential for the catalytic activity and assembly of complex I. The sequence is that of NADH-ubiquinone oxidoreductase chain 5 (MT-ND5) from Pongo abelii (Sumatran orangutan).